Here is a 118-residue protein sequence, read N- to C-terminus: Small ribosomal subunit protein bS6 (118 aa).

It belongs to the bacterial ribosomal protein bS6 family.

Functionally, binds together with bS18 to 16S ribosomal RNA. The chain is Small ribosomal subunit protein bS6 from Orientia tsutsugamushi (strain Ikeda) (Rickettsia tsutsugamushi).